Here is a 448-residue protein sequence, read N- to C-terminus: Serine--tRNA ligase (448 aa).

L-serine is bound at residue 246–248 (TAE). ATP contacts are provided by residues 277–279 (RKE) and Val-293. Glu-300 provides a ligand contact to L-serine. ATP is bound at residue 364–367 (ELAS). Thr-399 is an L-serine binding site.

Belongs to the class-II aminoacyl-tRNA synthetase family. Type-1 seryl-tRNA synthetase subfamily. Homodimer. The tRNA molecule binds across the dimer.

It localises to the cytoplasm. It carries out the reaction tRNA(Ser) + L-serine + ATP = L-seryl-tRNA(Ser) + AMP + diphosphate + H(+). The enzyme catalyses tRNA(Sec) + L-serine + ATP = L-seryl-tRNA(Sec) + AMP + diphosphate + H(+). It participates in aminoacyl-tRNA biosynthesis; selenocysteinyl-tRNA(Sec) biosynthesis; L-seryl-tRNA(Sec) from L-serine and tRNA(Sec): step 1/1. Functionally, catalyzes the attachment of serine to tRNA(Ser). Is also able to aminoacylate tRNA(Sec) with serine, to form the misacylated tRNA L-seryl-tRNA(Sec), which will be further converted into selenocysteinyl-tRNA(Sec). This chain is Serine--tRNA ligase, found in Pyrobaculum islandicum (strain DSM 4184 / JCM 9189 / GEO3).